The primary structure comprises 470 residues: Tryptophan synthase beta chain 1, chloroplastic (470 aa).

Polar residues predominate over residues M1–F10. The interval M1 to L24 is disordered. A compositionally biased stretch (low complexity) spans A12–S22. The residue at position 165 (K165) is an N6-(pyridoxal phosphate)lysine.

This sequence belongs to the TrpB family. As to quaternary structure, tetramer of two alpha and two beta chains. Pyridoxal 5'-phosphate serves as cofactor.

Its subcellular location is the plastid. It is found in the chloroplast. It catalyses the reaction (1S,2R)-1-C-(indol-3-yl)glycerol 3-phosphate + L-serine = D-glyceraldehyde 3-phosphate + L-tryptophan + H2O. The protein operates within amino-acid biosynthesis; L-tryptophan biosynthesis; L-tryptophan from chorismate: step 5/5. The beta subunit is responsible for the synthesis of L-tryptophan from indole and L-serine. This chain is Tryptophan synthase beta chain 1, chloroplastic (TSB1), found in Arabidopsis thaliana (Mouse-ear cress).